The sequence spans 462 residues: Bifunctional protein HldE (462 aa).

The interval 1–309 is ribokinase; it reads MKPRILVLGD…EYERSIRKAP (309 aa). An ATP-binding site is contributed by 186–189; the sequence is NKKE. D254 is a catalytic residue. The interval 336-462 is cytidylyltransferase; it reads FTNGCFDILH…TAIVERMRSC (127 aa).

In the N-terminal section; belongs to the carbohydrate kinase PfkB family. This sequence in the C-terminal section; belongs to the cytidylyltransferase family. In terms of assembly, homodimer.

The enzyme catalyses D-glycero-beta-D-manno-heptose 7-phosphate + ATP = D-glycero-beta-D-manno-heptose 1,7-bisphosphate + ADP + H(+). It catalyses the reaction D-glycero-beta-D-manno-heptose 1-phosphate + ATP + H(+) = ADP-D-glycero-beta-D-manno-heptose + diphosphate. It functions in the pathway nucleotide-sugar biosynthesis; ADP-L-glycero-beta-D-manno-heptose biosynthesis; ADP-L-glycero-beta-D-manno-heptose from D-glycero-beta-D-manno-heptose 7-phosphate: step 1/4. It participates in nucleotide-sugar biosynthesis; ADP-L-glycero-beta-D-manno-heptose biosynthesis; ADP-L-glycero-beta-D-manno-heptose from D-glycero-beta-D-manno-heptose 7-phosphate: step 3/4. Catalyzes the phosphorylation of D-glycero-D-manno-heptose 7-phosphate at the C-1 position to selectively form D-glycero-beta-D-manno-heptose-1,7-bisphosphate. In terms of biological role, catalyzes the ADP transfer from ATP to D-glycero-beta-D-manno-heptose 1-phosphate, yielding ADP-D-glycero-beta-D-manno-heptose. The protein is Bifunctional protein HldE of Nitratiruptor sp. (strain SB155-2).